The sequence spans 714 residues: Structure-specific endonuclease subunit SLX4 2 (714 aa).

2 stretches are compositionally biased toward basic and acidic residues: residues 1 to 14 (MSPE…EDNL) and 24 to 34 (IHEETLAEESH). Disordered regions lie at residues 1 to 114 (MSPE…EQQG) and 338 to 369 (SSGP…KTPQ). The segment covering 36–46 (QAIQRSISRLS) has biased composition (polar residues). Residues 79–92 (KTKKRKLKVSKPRK) are compositionally biased toward basic residues.

The protein belongs to the SLX4 family. Forms a heterodimer with SLX1. Phosphorylated in response to DNA damage.

It is found in the nucleus. Functionally, regulatory subunit of the SLX1-SLX4 structure-specific endonuclease that resolves DNA secondary structures generated during DNA repair and recombination. Has endonuclease activity towards branched DNA substrates, introducing single-strand cuts in duplex DNA close to junctions with ss-DNA. The protein is Structure-specific endonuclease subunit SLX4 2 of Candida tropicalis (strain ATCC MYA-3404 / T1) (Yeast).